The chain runs to 130 residues: Small ribosomal subunit protein uS8 (130 aa).

Belongs to the universal ribosomal protein uS8 family. Part of the 30S ribosomal subunit.

Functionally, one of the primary rRNA binding proteins, it binds directly to 16S rRNA central domain where it helps coordinate assembly of the platform of the 30S subunit. The protein is Small ribosomal subunit protein uS8 of Methanosarcina barkeri (strain Fusaro / DSM 804).